Reading from the N-terminus, the 409-residue chain is Elongation factor Tu, chloroplastic (409 aa).

In terms of domain architecture, tr-type G spans 10–214; it reads KQHVNIGTIG…NVDTYIPTPV (205 aa). The segment at 19–26 is G1; that stretch reads GHVDHGKT. 19–26 serves as a coordination point for GTP; it reads GHVDHGKT. Residue threonine 26 coordinates Mg(2+). The G2 stretch occupies residues 60-64; sequence GITIN. The interval 81–84 is G3; the sequence is DCPG. GTP is bound by residues 81–85 and 136–139; these read DCPGH and NKED. The interval 136–139 is G4; it reads NKED. The G5 stretch occupies residues 174 to 176; that stretch reads SAL.

The protein belongs to the TRAFAC class translation factor GTPase superfamily. Classic translation factor GTPase family. EF-Tu/EF-1A subfamily.

The protein resides in the plastid. It localises to the chloroplast. The catalysed reaction is GTP + H2O = GDP + phosphate + H(+). In terms of biological role, GTP hydrolase that promotes the GTP-dependent binding of aminoacyl-tRNA to the A-site of ribosomes during protein biosynthesis. The sequence is that of Elongation factor Tu, chloroplastic (tufA) from Tupiella akineta (Green alga).